The sequence spans 148 residues: Large ribosomal subunit protein uL13 (148 aa).

A disordered region spans residues Pro128–Lys148.

It belongs to the universal ribosomal protein uL13 family. In terms of assembly, part of the 50S ribosomal subunit.

This protein is one of the early assembly proteins of the 50S ribosomal subunit, although it is not seen to bind rRNA by itself. It is important during the early stages of 50S assembly. The polypeptide is Large ribosomal subunit protein uL13 (Saccharopolyspora erythraea (strain ATCC 11635 / DSM 40517 / JCM 4748 / NBRC 13426 / NCIMB 8594 / NRRL 2338)).